The following is a 736-amino-acid chain: Orphan sodium- and chloride-dependent neurotransmitter transporter NTT5 (736 aa).

Residues 1-138 lie on the Cytoplasmic side of the membrane; the sequence is MKTEAQPSTS…FAYLWLNSGG (138 aa). A run of 3 helical transmembrane segments spans residues 139–159, 177–197, and 199–219; these read CSFA…LLFL, IIAP…FILG, and YFNV…QFPV. Over 220-263 the chain is Extracellular; it reads PWEKCPLTMNSSGFDPECERTTPSIYFWYQQALKASDRIEDGGS. Asn-229 carries N-linked (GlcNAc...) asparagine glycosylation. The next 4 helical transmembrane spans lie at 264-284, 290-310, 338-358, and 383-403; these read PVYS…AFMI, TGKV…GFFI, VWSL…GSVA, and LTLL…ATVI. Residues 404–495 lie on the Extracellular side of the membrane; sequence THRCCERNAE…EAMSFLPPSV (92 aa). 5 consecutive transmembrane segments (helical) span residues 496-516, 534-554, 568-588, 609-629, and 659-679; these read FWSF…AIGI, HTKL…LFFT, YWIV…VSWA, IFGW…FVTM, and ALLL…AYFV. Topologically, residues 680 to 736 are cytoplasmic; the sequence is YCRIHRIPFRPKSGDGPMTASTSLPLSHQLTPSKEVQKEEILQVDETKYPSTCNVTS.

Belongs to the sodium:neurotransmitter symporter (SNF) (TC 2.A.22) family. SLC6A16 subfamily. In terms of tissue distribution, highly expressed in peripheral tissues, particularly in testis, pancreas, and prostate.

The protein resides in the membrane. The chain is Orphan sodium- and chloride-dependent neurotransmitter transporter NTT5 (SLC6A16) from Homo sapiens (Human).